Here is a 209-residue protein sequence, read N- to C-terminus: uncharacterized protein (209 aa).

This is an uncharacterized protein from Arabidopsis thaliana (Mouse-ear cress).